Consider the following 384-residue polypeptide: BTB and MATH domain-containing protein 34 (384 aa).

Residues leucine 41–lysine 127 adopt a coiled-coil conformation. Positions glutamate 167 to isoleucine 277 constitute an MATH domain. The 64-residue stretch at serine 317–arginine 380 folds into the BTB domain.

This Caenorhabditis elegans protein is BTB and MATH domain-containing protein 34 (bath-34).